The primary structure comprises 238 residues: Ribonuclease PH (238 aa).

Phosphate contacts are provided by residues R86 and 124–126; that span reads GTR.

This sequence belongs to the RNase PH family. Homohexameric ring arranged as a trimer of dimers.

It catalyses the reaction tRNA(n+1) + phosphate = tRNA(n) + a ribonucleoside 5'-diphosphate. Functionally, phosphorolytic 3'-5' exoribonuclease that plays an important role in tRNA 3'-end maturation. Removes nucleotide residues following the 3'-CCA terminus of tRNAs; can also add nucleotides to the ends of RNA molecules by using nucleoside diphosphates as substrates, but this may not be physiologically important. Probably plays a role in initiation of 16S rRNA degradation (leading to ribosome degradation) during starvation. This chain is Ribonuclease PH, found in Azorhizobium caulinodans (strain ATCC 43989 / DSM 5975 / JCM 20966 / LMG 6465 / NBRC 14845 / NCIMB 13405 / ORS 571).